The following is a 692-amino-acid chain: Elongation factor G (692 aa).

The tr-type G domain occupies 8 to 282 (EKTRNIGIMA…AIVDFLPAPT (275 aa)). GTP is bound by residues 17-24 (AHIDAGKT), 81-85 (DTPGH), and 135-138 (NKMD).

Belongs to the TRAFAC class translation factor GTPase superfamily. Classic translation factor GTPase family. EF-G/EF-2 subfamily.

Its subcellular location is the cytoplasm. In terms of biological role, catalyzes the GTP-dependent ribosomal translocation step during translation elongation. During this step, the ribosome changes from the pre-translocational (PRE) to the post-translocational (POST) state as the newly formed A-site-bound peptidyl-tRNA and P-site-bound deacylated tRNA move to the P and E sites, respectively. Catalyzes the coordinated movement of the two tRNA molecules, the mRNA and conformational changes in the ribosome. In Moorella thermoacetica (strain ATCC 39073 / JCM 9320), this protein is Elongation factor G.